A 337-amino-acid chain; its full sequence is Glyceraldehyde-3-phosphate dehydrogenase (337 aa).

Residues 12 to 13, Asp34, and Arg79 contribute to the NAD(+) site; that span reads RI. D-glyceraldehyde 3-phosphate is bound by residues 150–152, Thr181, 210–211, and Arg233; these read SCT and TG. The active-site Nucleophile is Cys151. Position 315 (Asn315) interacts with NAD(+).

The protein belongs to the glyceraldehyde-3-phosphate dehydrogenase family. In terms of assembly, homotetramer.

Its subcellular location is the cytoplasm. It carries out the reaction D-glyceraldehyde 3-phosphate + phosphate + NAD(+) = (2R)-3-phospho-glyceroyl phosphate + NADH + H(+). It participates in carbohydrate degradation; glycolysis; pyruvate from D-glyceraldehyde 3-phosphate: step 1/5. The sequence is that of Glyceraldehyde-3-phosphate dehydrogenase (GPD-1) from Claviceps purpurea (strain 20.1) (Ergot fungus).